The following is a 433-amino-acid chain: Serine hydroxymethyltransferase (433 aa).

(6S)-5,6,7,8-tetrahydrofolate-binding positions include leucine 132 and 136–138 (GHL). The residue at position 241 (lysine 241) is an N6-(pyridoxal phosphate)lysine.

This sequence belongs to the SHMT family. As to quaternary structure, homodimer. Requires pyridoxal 5'-phosphate as cofactor.

The protein resides in the cytoplasm. The enzyme catalyses (6R)-5,10-methylene-5,6,7,8-tetrahydrofolate + glycine + H2O = (6S)-5,6,7,8-tetrahydrofolate + L-serine. It participates in one-carbon metabolism; tetrahydrofolate interconversion. The protein operates within amino-acid biosynthesis; glycine biosynthesis; glycine from L-serine: step 1/1. Catalyzes the reversible interconversion of serine and glycine with tetrahydrofolate (THF) serving as the one-carbon carrier. This reaction serves as the major source of one-carbon groups required for the biosynthesis of purines, thymidylate, methionine, and other important biomolecules. Also exhibits THF-independent aldolase activity toward beta-hydroxyamino acids, producing glycine and aldehydes, via a retro-aldol mechanism. The sequence is that of Serine hydroxymethyltransferase from Bradyrhizobium sp. (strain ORS 278).